We begin with the raw amino-acid sequence, 127 residues long: Fumarate reductase subunit C (127 aa).

The next 3 membrane-spanning stretches (helical) occupy residues Ala-30–Val-50, Ile-67–Phe-87, and Val-107–Val-127.

The protein belongs to the FrdC family. In terms of assembly, part of an enzyme complex containing four subunits: a flavoprotein (FrdA), an iron-sulfur protein (FrdB), and two hydrophobic anchor proteins (FrdC and FrdD).

The protein resides in the cell inner membrane. Anchors the catalytic components of the fumarate reductase complex to the cell membrane, binds quinones. This chain is Fumarate reductase subunit C, found in Aliivibrio salmonicida (strain LFI1238) (Vibrio salmonicida (strain LFI1238)).